The primary structure comprises 274 residues: Cyclase-like protein 1 (274 aa).

Residues 1–18 form the signal peptide; it reads MAASRLALLLLVLAVAAA.

Belongs to the Cyclase 1 superfamily. Highly expressed in leaf sheaths. Expressed in leaf collars.

The protein localises to the secreted. Its subcellular location is the extracellular space. The protein resides in the extracellular matrix. May be involved in response to stresses. The polypeptide is Cyclase-like protein 1 (Oryza sativa subsp. japonica (Rice)).